We begin with the raw amino-acid sequence, 143 residues long: Large ribosomal subunit protein uL11 (143 aa).

It belongs to the universal ribosomal protein uL11 family. As to quaternary structure, part of the ribosomal stalk of the 50S ribosomal subunit. Interacts with L10 and the large rRNA to form the base of the stalk. L10 forms an elongated spine to which L12 dimers bind in a sequential fashion forming a multimeric L10(L12)X complex. In terms of processing, one or more lysine residues are methylated.

Its function is as follows. Forms part of the ribosomal stalk which helps the ribosome interact with GTP-bound translation factors. The protein is Large ribosomal subunit protein uL11 of Cupriavidus metallidurans (strain ATCC 43123 / DSM 2839 / NBRC 102507 / CH34) (Ralstonia metallidurans).